A 303-amino-acid polypeptide reads, in one-letter code: Hemolysin E, chromosomal (303 aa).

A disulfide bridge connects residues Cys87 and Cys285. A helical transmembrane segment spans residues 183-203; it reads AGVVAGPFGLIISYSIAAGVV.

Monomer and oligomer. In periplasm, it is present as a monomer, while in outer membrane vesicles, it oligomerizes to form a pore structure that is active. The pore is formed by a dodecamer. Post-translationally, in periplasm, it forms a disulfide bond between Cys-87 and Cys-285, which prevents the oligomerization. In outer membrane vesicles, the redox status prevents formation of the disulfide bond, leading to oligomerization and pore formation.

The protein localises to the secreted. It is found in the periplasm. It localises to the host cell membrane. Its function is as follows. Toxin, which has some hemolytic activity towards mammalian cells. Acts by forming a pore-like structure upon contact with mammalian cells. The protein is Hemolysin E, chromosomal (hlyE) of Escherichia coli (strain K12).